Here is a 250-residue protein sequence, read N- to C-terminus: Small ribosomal subunit protein uS2 (250 aa).

Residues 225–250 (GAQGGRQARGEDLGAAVEAPSEDALA) are disordered.

It belongs to the universal ribosomal protein uS2 family.

In Rhizorhabdus wittichii (strain DSM 6014 / CCUG 31198 / JCM 15750 / NBRC 105917 / EY 4224 / RW1) (Sphingomonas wittichii), this protein is Small ribosomal subunit protein uS2.